Here is a 533-residue protein sequence, read N- to C-terminus: Subtilisin-like protease 1 (533 aa).

The signal sequence occupies residues M1–A19. Residues A20–H116 constitute a propeptide that is removed on maturation. In terms of domain architecture, Inhibitor I9 spans S34–V115. In terms of domain architecture, Peptidase S8 spans S126 to K400. Residues D158 and H190 each act as charge relay system in the active site. The tract at residues G175–M198 is disordered. N233 and N251 each carry an N-linked (GlcNAc...) asparagine glycan. A compositionally biased stretch (polar residues) spans N282–S294. The segment at N282 to S312 is disordered. S345 serves as the catalytic Charge relay system. A compositionally biased stretch (polar residues) spans T378–I394. Positions T378–D512 are disordered. Positions N405–P470 are enriched in pro residues. Residues F471 to P487 show a composition bias toward low complexity. Residues A488 to P502 show a composition bias toward pro residues.

This sequence belongs to the peptidase S8 family.

The protein localises to the secreted. In terms of biological role, secreted subtilisin-like serine protease with keratinolytic activity that contributes to pathogenicity. In Arthroderma benhamiae (strain ATCC MYA-4681 / CBS 112371) (Trichophyton mentagrophytes), this protein is Subtilisin-like protease 1 (SUB1).